A 117-amino-acid chain; its full sequence is Glutamine-rich protein (117 aa).

Low complexity predominate over residues 27–72 (RQQFQQQQQQQRQPQLQQQQQQQGIQQQPQGLQHQQQQFGLTQQHG). Residues 27 to 88 (RQQFQQQQQQ…IVQPNPASQN (62 aa)) are disordered. A compositionally biased stretch (polar residues) spans 75 to 87 (RRQNIVQPNPASQ).

In terms of tissue distribution, component of the acid-soluble and acid-insoluble organic matrix of calcified shell layers (at protein level).

The protein resides in the secreted. The protein is Glutamine-rich protein of Haliotis asinina (Donkey's ear abalone).